We begin with the raw amino-acid sequence, 148 residues long: FAD synthase (148 aa).

ATP is bound by residues 14–15 (VF), 19–22 (HAGH), and aspartate 100.

This sequence belongs to the archaeal FAD synthase family. As to quaternary structure, homodimer. A divalent metal cation serves as cofactor.

The catalysed reaction is FMN + ATP + H(+) = FAD + diphosphate. Its pathway is cofactor biosynthesis; FAD biosynthesis; FAD from FMN: step 1/1. Its function is as follows. Catalyzes the transfer of the AMP portion of ATP to flavin mononucleotide (FMN) to produce flavin adenine dinucleotide (FAD) coenzyme. The polypeptide is FAD synthase (Pyrococcus horikoshii (strain ATCC 700860 / DSM 12428 / JCM 9974 / NBRC 100139 / OT-3)).